We begin with the raw amino-acid sequence, 365 residues long: Aminomethyltransferase (365 aa).

The protein belongs to the GcvT family. As to quaternary structure, the glycine cleavage system is composed of four proteins: P, T, L and H.

The enzyme catalyses N(6)-[(R)-S(8)-aminomethyldihydrolipoyl]-L-lysyl-[protein] + (6S)-5,6,7,8-tetrahydrofolate = N(6)-[(R)-dihydrolipoyl]-L-lysyl-[protein] + (6R)-5,10-methylene-5,6,7,8-tetrahydrofolate + NH4(+). Its function is as follows. The glycine cleavage system catalyzes the degradation of glycine. In Desulfitobacterium hafniense (strain DSM 10664 / DCB-2), this protein is Aminomethyltransferase.